The following is a 100-amino-acid chain: ESAT-6-like protein EsxT (100 aa).

This sequence belongs to the WXG100 family. ESAT-6 subfamily. In terms of assembly, forms a tight 1:1 complex with EsxU.

It localises to the secreted. This Mycobacterium tuberculosis (strain CDC 1551 / Oshkosh) protein is ESAT-6-like protein EsxT.